Here is a 470-residue protein sequence, read N- to C-terminus: AAA-ATPase At5g17730 (470 aa).

Positions 1–18 (MFSLRNLPSLAPFVSAYA) are cleaved as a signal peptide. 252 to 259 (GPPGTGKT) serves as a coordination point for ATP.

The protein belongs to the AAA ATPase family. BCS1 subfamily. The cofactor is Mg(2+).

The catalysed reaction is ATP + H2O = ADP + phosphate + H(+). In Arabidopsis thaliana (Mouse-ear cress), this protein is AAA-ATPase At5g17730.